The primary structure comprises 140 residues: Natriuretic peptides B (140 aa).

Residues 1 to 26 (MEPCAALPRALLLLLFLHLSPLGGRP) form the signal peptide. Residues 71-94 (LEPLHRSHSPAEAPEAGGTPRGVL) are disordered. Cys-118 and Cys-134 are joined by a disulfide.

Belongs to the natriuretic peptide family. In terms of processing, the precursor molecule is proteolytically cleaved by the endoproteases FURIN or CORIN at Arg-108 to produce the brain natriuretic peptide 32. CORIN also cleaves the precursor molecule at additional residues including Arg-105, Arg-108 and possibly Lys-111. Undergoes further proteolytic cleavage by various proteases such as DPP4, MME and possibly FAP, to give rise to a variety of shorter peptides. Cleaved at Pro-110 by the prolyl endopeptidase FAP (seprase) activity (in vitro). Degraded by IDE. During IDE degradation, the resulting products initially increase the activation of NPR1 and can also stimulate NPR2 to produce cGMP before the fragments are completely degraded and inactivated by IDE (in vitro). Brain and also in atria, but at much lower levels than ANP.

It is found in the secreted. In terms of biological role, cardiac hormone that plays a key role in mediating cardio-renal homeostasis. May also function as a paracrine antifibrotic factor in the heart. Acts by specifically binding and stimulating NPR1 to produce cGMP, which in turn activates effector proteins that drive various biological responses. Involved in regulating the extracellular fluid volume and maintaining the fluid-electrolyte balance through natriuresis, diuresis, vasorelaxation, and inhibition of renin and aldosterone secretion. Binds the clearance receptor NPR3. Functionally, may affect cardio-renal homeostasis. Able to promote the production of cGMP although its potency is very low compared to brain natriuretic peptide 32. The chain is Natriuretic peptides B (NPPB) from Canis lupus familiaris (Dog).